A 93-amino-acid polypeptide reads, in one-letter code: Alpha-defensin 13 (93 aa).

A signal peptide spans 1–19 (MKTLVLLSALVLLAFQVQA). Positions 20–58 (DPIQNTDEETKTEEQPGEEDQAVSVSFGDPEGTSLQEES) are excised as a propeptide. Positions 22–54 (IQNTDEETKTEEQPGEEDQAVSVSFGDPEGTSL) are disordered. 3 disulfide bridges follow: Cys64–Cys92, Cys66–Cys81, and Cys71–Cys91.

The protein belongs to the alpha-defensin family. As to expression, paneth cells of the small bowel.

The protein resides in the secreted. Probably contributes to the antimicrobial barrier function of the small bowel mucosa. This is Alpha-defensin 13 (Defa13) from Mus musculus (Mouse).